Reading from the N-terminus, the 296-residue chain is Nucleotide-binding protein str0831 (296 aa).

13 to 20 serves as a coordination point for ATP; sequence GMSGAGKT. 63 to 66 contributes to the GTP binding site; that stretch reads DMRS.

Belongs to the RapZ-like family.

Functionally, displays ATPase and GTPase activities. The protein is Nucleotide-binding protein str0831 of Streptococcus thermophilus (strain CNRZ 1066).